Here is a 235-residue protein sequence, read N- to C-terminus: Transmembrane protein 215 (235 aa).

The next 2 membrane-spanning stretches (helical) occupy residues 12–32 (LVVALVSVFLVFGFMFTVSGM) and 40–60 (IPLLAIGPAICLPGIAAIALA). A disordered region spans residues 99–146 (SDLESGKGSSDELAKKAGLRGKQLPQGPGEVPMASSVTTPTPTEEGEC).

Its subcellular location is the membrane. The sequence is that of Transmembrane protein 215 (Tmem215) from Mus musculus (Mouse).